A 128-amino-acid chain; its full sequence is SH2 domain-containing protein 1A (128 aa).

The SH2 domain maps to 6-102; that stretch reads VYHGKISRET…GIVIPLQYPV (97 aa). Positions 67–92 are interaction with FYN SH3 domain; that stretch reads ETAPGVHKRFFRKIKNLISAFQKPDQ. Lys-89 bears the N6-acetyllysine mark. Residues 104 to 128 form a disordered region; that stretch reads KKPSARSTQGATGRRDDPDVFLKTP. Positions 116-128 are enriched in basic and acidic residues; that stretch reads GRRDDPDVFLKTP.

In terms of assembly, interacts with CD84, CD244, LY9, SLAMF1 and FYN. Interacts with NTRK1, NTRK2 and NTRK3.

It is found in the cytoplasm. Cytoplasmic adapter regulating receptors of the signaling lymphocytic activation molecule (SLAM) family such as SLAMF1, CD244, LY9, CD84, SLAMF6 and SLAMF7. In SLAM signaling seems to cooperate with SH2D1B/EAT-2. Initially it has been proposed that association with SLAMF1 prevents SLAMF1 binding to inhibitory effectors including INPP5D/SHIP1 and PTPN11/SHP-2. However, by simultaneous interactions, recruits FYN which subsequently phosphorylates and activates SLAMF1. Positively regulates CD244/2B4- and CD84-mediated natural killer (NK) cell functions. Can also promote CD48-, SLAMF6 -, LY9-, and SLAMF7-mediated NK cell activation. In the context of NK cell-mediated cytotoxicity enhances conjugate formation with target cells. May also regulate the activity of the neurotrophin receptors NTRK1, NTRK2 and NTRK3. This chain is SH2 domain-containing protein 1A (SH2D1A), found in Bos taurus (Bovine).